A 623-amino-acid chain; its full sequence is Kelch-like protein diablo (623 aa).

Residues 1–54 form a disordered region; it reads MGDLPGSGSTAQPRDAAVTGTGGNSTAGGGSSVGSTAVDRPPSPARLSHTSEKH. Position 19 is a phosphothreonine (T19). Residues 20 to 32 are compositionally biased toward gly residues; the sequence is GTGGNSTAGGGSS. The BTB domain occupies 72–139; that stretch reads CDVVLNVGGR…CYTAHIMVEE (68 aa). The BACK domain occupies 174-276; the sequence is CLGIRAFADT…SPKFLVGTVG (103 aa). Kelch repeat units lie at residues 323–369, 371–417, 418–464, 466–511, 513–558, and 559–605; these read VLFA…VLND, LYAV…VLDG, FLYA…VLGG, LYAI…VFNN, IYAV…VVNG, and QLYA…VMRA.

Its pathway is protein modification; protein ubiquitination. In terms of biological role, probable substrate-specific adapter of an E3 ubiquitin-protein ligase complex which mediates the ubiquitination and subsequent proteasomal degradation of target proteins. May have a role in synapse differentiation and growth. The polypeptide is Kelch-like protein diablo (Drosophila erecta (Fruit fly)).